A 925-amino-acid polypeptide reads, in one-letter code: Protein translocase subunit SecA (925 aa).

ATP is bound by residues Gln-87, 105–109 (GEGKT), and Asp-531. The disordered stretch occupies residues 867-909 (AAGADMRFQHSQPESVLHKPEAGEGEEAQPFRRETPKVGRNDP). The span at 895-906 (QPFRRETPKVGR) shows a compositional bias: basic and acidic residues. Residues Cys-910, Cys-912, Cys-921, and His-922 each coordinate Zn(2+).

It belongs to the SecA family. In terms of assembly, monomer and homodimer. Part of the essential Sec protein translocation apparatus which comprises SecA, SecYEG and auxiliary proteins SecDF-YajC and YidC. The cofactor is Zn(2+).

The protein localises to the cell inner membrane. The protein resides in the cytoplasm. The enzyme catalyses ATP + H2O + cellular proteinSide 1 = ADP + phosphate + cellular proteinSide 2.. In terms of biological role, part of the Sec protein translocase complex. Interacts with the SecYEG preprotein conducting channel. Has a central role in coupling the hydrolysis of ATP to the transfer of proteins into and across the cell membrane, serving both as a receptor for the preprotein-SecB complex and as an ATP-driven molecular motor driving the stepwise translocation of polypeptide chains across the membrane. The sequence is that of Protein translocase subunit SecA from Thioalkalivibrio sulfidiphilus (strain HL-EbGR7).